The chain runs to 481 residues: Glucokinase-1 (481 aa).

Residues 4–477 (PKLTKAVDSI…SGVGAALCAL (474 aa)) enclose the Hexokinase domain. The interval 64-204 (SGQEHGVTML…LSNVHVVALT (141 aa)) is hexokinase small subdomain. Residue Lys-101 participates in ATP binding. Positions 146-172 (KMGFTFSYPVDQTSLSSGKLIRWTKGF) are glucose-binding. The interval 205–466 (NDTTGTLLAR…RDVHLRISKD (262 aa)) is hexokinase large subdomain. Position 466 to 471 (466 to 471 (DGSGVG)) interacts with ATP.

Belongs to the hexokinase family.

The enzyme catalyses D-glucose + ATP = D-glucose 6-phosphate + ADP + H(+). The catalysed reaction is a D-hexose + ATP = a D-hexose 6-phosphate + ADP + H(+). It catalyses the reaction D-mannose + ATP = D-mannose 6-phosphate + ADP + H(+). The protein operates within carbohydrate metabolism; hexose metabolism. It functions in the pathway carbohydrate degradation; glycolysis; D-glyceraldehyde 3-phosphate and glycerone phosphate from D-glucose: step 1/4. Its function is as follows. Glukokinase specific for aldohexoses. Phosphorylates glucose and mannose, but not fructose. In Kluyveromyces lactis (strain ATCC 8585 / CBS 2359 / DSM 70799 / NBRC 1267 / NRRL Y-1140 / WM37) (Yeast), this protein is Glucokinase-1 (GLK1).